A 368-amino-acid polypeptide reads, in one-letter code: Putative agmatine deiminase (368 aa).

The active-site Amidino-cysteine intermediate is the cysteine 359.

It belongs to the agmatine deiminase family.

The enzyme catalyses agmatine + H2O = N-carbamoylputrescine + NH4(+). In Pectobacterium atrosepticum (strain SCRI 1043 / ATCC BAA-672) (Erwinia carotovora subsp. atroseptica), this protein is Putative agmatine deiminase.